Consider the following 230-residue polypeptide: ATP-dependent dethiobiotin synthetase BioD (230 aa).

12-17 contributes to the ATP binding site; the sequence is DIGKTH. Threonine 16 lines the Mg(2+) pocket. The active site involves lysine 37. Serine 41 serves as a coordination point for substrate. ATP is bound by residues aspartate 52, 115 to 118, and 175 to 176; these read EGAG and SE. The Mg(2+) site is built by aspartate 52 and glutamate 115.

It belongs to the dethiobiotin synthetase family. In terms of assembly, homodimer. Requires Mg(2+) as cofactor.

Its subcellular location is the cytoplasm. The catalysed reaction is (7R,8S)-7,8-diammoniononanoate + CO2 + ATP = (4R,5S)-dethiobiotin + ADP + phosphate + 3 H(+). It functions in the pathway cofactor biosynthesis; biotin biosynthesis; biotin from 7,8-diaminononanoate: step 1/2. Functionally, catalyzes a mechanistically unusual reaction, the ATP-dependent insertion of CO2 between the N7 and N8 nitrogen atoms of 7,8-diaminopelargonic acid (DAPA, also called 7,8-diammoniononanoate) to form a ureido ring. The protein is ATP-dependent dethiobiotin synthetase BioD of Caulobacter sp. (strain K31).